The following is a 277-amino-acid chain: Large ribosomal subunit protein uL2 (277 aa).

The segment at 219–277 (TVRGSVMNPNDHPHGGGEGKAPVGRKAPSTPWGKPALGLKTRNKKAKSNKLIVRRRNEK) is disordered. Over residues 259–277 (TRNKKAKSNKLIVRRRNEK) the composition is skewed to basic residues.

The protein belongs to the universal ribosomal protein uL2 family. As to quaternary structure, part of the 50S ribosomal subunit. Forms a bridge to the 30S subunit in the 70S ribosome.

In terms of biological role, one of the primary rRNA binding proteins. Required for association of the 30S and 50S subunits to form the 70S ribosome, for tRNA binding and peptide bond formation. It has been suggested to have peptidyltransferase activity; this is somewhat controversial. Makes several contacts with the 16S rRNA in the 70S ribosome. The sequence is that of Large ribosomal subunit protein uL2 from Streptococcus equi subsp. zooepidemicus (strain MGCS10565).